Consider the following 217-residue polypeptide: MLO-like protein (217 aa).

3 consecutive transmembrane segments (helical) span residues 35–55 (FKVVVGISPILWFFAVLFLLS), 59–79 (GWVAYLWLPFIPLIIILVVGT), and 119–139 (LVLFLIHFCLFQNAFQLAFFI).

Belongs to the MLO family.

The protein resides in the membrane. In terms of biological role, may be involved in modulation of pathogen defense and leaf cell death. The chain is MLO-like protein from Linum usitatissimum (Flax).